Reading from the N-terminus, the 487-residue chain is Melanopsin (487 aa).

The segment at 1–37 (MNPPSGPRTQEPSCVATPASPSRWDGYRSSTSSLDQP) is disordered. The Extracellular segment spans residues 1–67 (MNPPSGPRTQ…VDVPDHAHYT (67 aa)). The helical transmembrane segment at 68 to 88 (LGTVILLVGLTGILGNLMVIY) threads the bilayer. Residues 89 to 102 (TFCRSRGLRTPANM) lie on the Cytoplasmic side of the membrane. A helical membrane pass occupies residues 103–123 (FIINLAVSDFFMSFTQAPVFF). Over 124–139 (ASSLHKRWLFGEAGCE) the chain is Extracellular. Cys-138 and Cys-216 are disulfide-bonded. Residues 140 to 160 (FYAFCGALFGITSMITLMAIA) traverse the membrane as a helical segment. The Cytoplasmic segment spans residues 161-183 (LDRYLVITHPLATIGVVSKRRAA). Residues 184-204 (LVLLGVWLYALAWSLPPFFGW) traverse the membrane as a helical segment. Residues 205–233 (SAYVPEGLLTSCSWDYMSFTPSVRAYTML) lie on the Extracellular side of the membrane. The helical transmembrane segment at 234–254 (LFCFVFFLPLLVIVYCYIFIF) threads the bilayer. The Cytoplasmic portion of the chain corresponds to 255 to 291 (RAIRETGQALQTFRACEGGGRSPRQRQRLQREWKMAK). The chain crosses the membrane as a helical span at residues 292 to 312 (IELLVILLFVLSWAPYSIVAL). The Extracellular portion of the chain corresponds to 313 to 327 (MAFAGYAHVLTPYMN). Residues 328-348 (SVPAVIAKASAIHNPIIYAIT) traverse the membrane as a helical segment. An N6-(retinylidene)lysine modification is found at Lys-335. Residues 349 to 487 (HPKYRMAIAQ…LPLHPGWAFH (139 aa)) are Cytoplasmic-facing. Residues 436–459 (CSQGLEDREAKAPVRPQGREAETP) form a disordered region. Over residues 440–457 (LEDREAKAPVRPQGREAE) the composition is skewed to basic and acidic residues.

This sequence belongs to the G-protein coupled receptor 1 family. Opsin subfamily. In terms of tissue distribution, eye. Expression is restricted within the ganglion cell layer.

The protein localises to the cell membrane. Its subcellular location is the cell projection. The protein resides in the axon. It localises to the dendrite. It is found in the perikaryon. Functionally, photoreceptor that binds cis-retinaldehydes. Contributes to pupillar reflex, photoentrainment and other non-image forming responses to light. May be involved in the optokinetic visual tracking response. May be involved in the regulation of retinal hyaloid vessel growth and regression. The protein is Melanopsin (OPN4) of Felis catus (Cat).